The primary structure comprises 183 residues: Capsid protein (183 aa).

The disordered stretch occupies residues 136–183; that stretch reads NAPILSTLPETTVVRRRGRSPRRRTPSPRRRRSESPRRRRSQSRESQC. Basic residues predominate over residues 149–176; sequence VRRRGRSPRRRTPSPRRRRSESPRRRRS. 3 positions are modified to phosphoserine; by host: Ser155, Ser162, and Ser170. One copy of the 1; half-length repeat lies at 155–160; it reads SPRRRT. The interval 155-176 is 3 X 7 AA repeats of S-P-R-R-R-[PR]-S; the sequence is SPRRRTPSPRRRRSESPRRRRS. Residues 158 to 175 carry the Bipartite nuclear localization signal motif; that stretch reads RRTPSPRRRRSESPRRRR. Repeat copies occupy residues 162–168 and 170–176. The segment at 177 to 183 is RNA binding; it reads QSRESQC.

This sequence belongs to the orthohepadnavirus core antigen family. As to quaternary structure, homodimerizes, then multimerizes. Interacts with cytosol exposed regions of viral L glycoprotein present in the reticulum-to-Golgi compartment. Interacts with human FLNB. Phosphorylated form interacts with host importin alpha; this interaction depends on the exposure of the NLS, which itself depends upon genome maturation and/or phosphorylation of the capsid protein. Interacts with host NUP153. In terms of processing, phosphorylated by host SRPK1, SRPK2, and maybe protein kinase C or GAPDH. Phosphorylation is critical for pregenomic RNA packaging. Protein kinase C phosphorylation is stimulated by HBx protein and may play a role in transport of the viral genome to the nucleus at the late step during the viral replication cycle.

The protein resides in the virion. It is found in the host cytoplasm. Functionally, self assembles to form an icosahedral capsid. Most capsids appear to be large particles with an icosahedral symmetry of T=4 and consist of 240 copies of capsid protein, though a fraction forms smaller T=3 particles consisting of 180 capsid proteins. Entering capsids are transported along microtubules to the nucleus. Phosphorylation of the capsid is thought to induce exposure of nuclear localization signal in the C-terminal portion of the capsid protein that allows binding to the nuclear pore complex via the importin (karyopherin-) alpha and beta. Capsids are imported in intact form through the nuclear pore into the nuclear basket, where it probably binds NUP153. Only capsids that contain the mature viral genome can release the viral DNA and capsid protein into the nucleoplasm. Immature capsids get stuck in the basket. Capsids encapsulate the pre-genomic RNA and the P protein. Pre-genomic RNA is reverse-transcribed into DNA while the capsid is still in the cytoplasm. The capsid can then either be directed to the nucleus, providing more genomes for transcription, or bud through the endoplasmic reticulum to provide new virions. This chain is Capsid protein, found in Homo sapiens (Human).